An 821-amino-acid chain; its full sequence is Leucine--tRNA ligase (821 aa).

The short motif at 42 to 52 is the 'HIGH' region element; it reads PYPSGKLHMGH. A 'KMSKS' region motif is present at residues 583-587; it reads KMSKS. Lysine 586 lines the ATP pocket.

Belongs to the class-I aminoacyl-tRNA synthetase family.

The protein localises to the cytoplasm. The enzyme catalyses tRNA(Leu) + L-leucine + ATP = L-leucyl-tRNA(Leu) + AMP + diphosphate. This Carboxydothermus hydrogenoformans (strain ATCC BAA-161 / DSM 6008 / Z-2901) protein is Leucine--tRNA ligase.